Consider the following 110-residue polypeptide: MQVFRAVVLFILAGLAEIAGGYLVWQWLRADRSIWFGVLGAILLVGYGFLPTLQPQVWSFGRVYAAYGGVFIVLSLAWGWLIDHNPPDQPSLVGACLALVGAAIILYWPR.

4 helical membrane passes run 7–27, 33–53, 63–83, and 89–109; these read VVLFILAGLAEIAGGYLVWQW, SIWFGVLGAILLVGYGFLPTL, VYAAYGGVFIVLSLAWGWLID, and QPSLVGACLALVGAAIILYWP.

The protein belongs to the UPF0060 family.

The protein resides in the cell membrane. The protein is UPF0060 membrane protein Haur_1798 of Herpetosiphon aurantiacus (strain ATCC 23779 / DSM 785 / 114-95).